A 328-amino-acid chain; its full sequence is L-lactate dehydrogenase (328 aa).

Residues valine 18, glutamate 39, lysine 46, tyrosine 71, and 85-86 each bind NAD(+); that span reads GA. Substrate-binding residues include glutamine 88 and arginine 94. NAD(+) contacts are provided by residues serine 107, 124 to 126, and serine 149; that span reads AAN. Substrate is bound at residue 126 to 129; it reads NPVD. 154 to 157 contacts substrate; sequence DTAR. The beta-D-fructose 1,6-bisphosphate site is built by arginine 159 and histidine 174. Histidine 181 (proton acceptor) is an active-site residue. Tyrosine 226 is modified (phosphotyrosine). Position 235 (threonine 235) interacts with substrate.

This sequence belongs to the LDH/MDH superfamily. LDH family. As to quaternary structure, homotetramer.

It is found in the cytoplasm. The catalysed reaction is (S)-lactate + NAD(+) = pyruvate + NADH + H(+). It participates in fermentation; pyruvate fermentation to lactate; (S)-lactate from pyruvate: step 1/1. Allosterically activated by fructose 1,6-bisphosphate (FBP). Functionally, catalyzes the conversion of lactate to pyruvate. The chain is L-lactate dehydrogenase from Streptococcus mutans serotype c (strain ATCC 700610 / UA159).